The sequence spans 352 residues: Pre-rRNA-processing protein ipi1 (352 aa).

It belongs to the IPI1/TEX10 family. As to quaternary structure, component of the RIX1 complex, composed of rrm-9/ipi1, rix1/ipi2 and ipi3 in a 1:2:2 stoichiometry. The complex interacts (via rix1) with mdn1 (via its hexameric AAA ATPase ring) and the pre-60S ribosome particles.

The protein localises to the nucleus. Its function is as follows. Component of the RIX1 complex required for processing of ITS2 sequences from 35S pre-rRNA. In Neurospora crassa (strain ATCC 24698 / 74-OR23-1A / CBS 708.71 / DSM 1257 / FGSC 987), this protein is Pre-rRNA-processing protein ipi1 (rrm-9).